Consider the following 341-residue polypeptide: Tetraacyldisaccharide 4'-kinase (341 aa).

Residue 54–61 coordinates ATP; it reads TVGGAGKT.

This sequence belongs to the LpxK family.

It carries out the reaction a lipid A disaccharide + ATP = a lipid IVA + ADP + H(+). It functions in the pathway glycolipid biosynthesis; lipid IV(A) biosynthesis; lipid IV(A) from (3R)-3-hydroxytetradecanoyl-[acyl-carrier-protein] and UDP-N-acetyl-alpha-D-glucosamine: step 6/6. Transfers the gamma-phosphate of ATP to the 4'-position of a tetraacyldisaccharide 1-phosphate intermediate (termed DS-1-P) to form tetraacyldisaccharide 1,4'-bis-phosphate (lipid IVA). The sequence is that of Tetraacyldisaccharide 4'-kinase from Brucella ovis (strain ATCC 25840 / 63/290 / NCTC 10512).